A 377-amino-acid polypeptide reads, in one-letter code: Acetyltransferase ple2 (377 aa).

An N-terminal signal peptide occupies residues methionine 1–glycine 27. Helical transmembrane passes span tryptophan 29–aspartate 49, isoleucine 56–valine 76, isoleucine 176–leucine 196, and proline 258–glycine 278.

Belongs to the wax synthase family.

Its subcellular location is the membrane. The protein operates within secondary metabolite biosynthesis; terpenoid biosynthesis. In terms of biological role, acetyltransferase; part of the gene cluster that mediates the biosynthesis of pleuromutilin, a tricyclic diterpene showing antibacterial properties. The geranylgeranyl diphosphate (GGPP) synthase ple4 catalyzes the first step in pleuromutilin biosynthesis. GGPP is then substrate of the premutilin synthase (PS) ple3 to yield premutilin. Premutilin synthase is a bifunctional enzyme composed of the fusion of a class II diterpene cyclase (DTC) and a class I diterpene synthase (DTS), with the corresponding domains and active sites containing characteristic aspartate-rich motifs. GGPP is first converted to mutildienyl-diphosphate (MPP) at the class II DTC site. MPP is subsequently further cyclized at the class I DTS site, followed by a 1,5-hydride shift and addition of water prior to terminating deprotonation, to yield premutilin. The cytochrome P450 monooxygenases ple5 and ple6 hydroxylate premutilin at C-11 and C-3, respectively, producing 11-hydroxypremutilin and 3-hydroxypremutilin. The combination of the actions of both ple5 and ple6 leads to the production of 3,11-dihydroxypremutilin. The short chain dehydrogenase ple7 further converts 3,11-dihydroxypremutilin into mutilin. The acetyltransferase ple2 then acetylates mutilin to produce 14-O-acetylmutilin. Finally, the cytochrome P450 monooxygenase ple1 catalyzes hydroxylation on the alpha position of the acetyl side chain of 14-O-acetylmutilin to yield pleuromutilin. The sequence is that of Acetyltransferase ple2 from Rhodocybe pseudopiperita (Clitopilus pseudopiperitus).